Consider the following 218-residue polypeptide: MRTMNLAGMIDHTLLKPEATEKDIVNLCHEAKQHKFATVCINPAYICTAAKLLHGSGVGVATVIGFPLGATMTEIKVQEIFAAKAHGAREVDIVINIGWAKSGNWEAVAKDITRAVEAAHCCGVTIKVIIETSLLTEEEKQKAAEIVKASGADYIKTSTGFAGGGATVEDVRNLKAWVGQSVKVKASGGIRSRETALQMVEAGADRLGTSSGVQIITV.

Asp-92 serves as the catalytic Proton donor/acceptor. Residue Lys-156 is the Schiff-base intermediate with acetaldehyde of the active site. Catalysis depends on Lys-185, which acts as the Proton donor/acceptor.

Belongs to the DeoC/FbaB aldolase family. DeoC type 1 subfamily.

The protein localises to the cytoplasm. It carries out the reaction 2-deoxy-D-ribose 5-phosphate = D-glyceraldehyde 3-phosphate + acetaldehyde. It functions in the pathway carbohydrate degradation; 2-deoxy-D-ribose 1-phosphate degradation; D-glyceraldehyde 3-phosphate and acetaldehyde from 2-deoxy-alpha-D-ribose 1-phosphate: step 2/2. Catalyzes a reversible aldol reaction between acetaldehyde and D-glyceraldehyde 3-phosphate to generate 2-deoxy-D-ribose 5-phosphate. The protein is Deoxyribose-phosphate aldolase of Desulfitobacterium hafniense (strain DSM 10664 / DCB-2).